The following is a 150-amino-acid chain: 16.9 kDa class I heat shock protein 1 (150 aa).

The tract at residues 1-42 is important for thermostability under elevated temperature; that stretch reads MSLVRRSNVFDPFSLDLWDPFDSVFRSVVPATSDNDTAAFAN. The sHSP domain maps to 36-150; that stretch reads DTAAFANARI…PEVKAIEISG (115 aa).

It belongs to the small heat shock protein (HSP20) family. Forms oligomeric structures.

It localises to the cytoplasm. The protein is 16.9 kDa class I heat shock protein 1 (HSP16.9A) of Oryza sativa subsp. japonica (Rice).